The chain runs to 307 residues: 4-hydroxy-tetrahydrodipicolinate synthase (307 aa).

Residue Ser-57 coordinates pyruvate. The Proton donor/acceptor role is filled by Tyr-145. Lys-173 acts as the Schiff-base intermediate with substrate in catalysis. Pyruvate is bound at residue Ile-219.

Belongs to the DapA family. In terms of assembly, homotetramer; dimer of dimers.

The protein resides in the cytoplasm. It catalyses the reaction L-aspartate 4-semialdehyde + pyruvate = (2S,4S)-4-hydroxy-2,3,4,5-tetrahydrodipicolinate + H2O + H(+). The protein operates within amino-acid biosynthesis; L-lysine biosynthesis via DAP pathway; (S)-tetrahydrodipicolinate from L-aspartate: step 3/4. Catalyzes the condensation of (S)-aspartate-beta-semialdehyde [(S)-ASA] and pyruvate to 4-hydroxy-tetrahydrodipicolinate (HTPA). The protein is 4-hydroxy-tetrahydrodipicolinate synthase of Polynucleobacter asymbioticus (strain DSM 18221 / CIP 109841 / QLW-P1DMWA-1) (Polynucleobacter necessarius subsp. asymbioticus).